The sequence spans 96 residues: UPF0235 protein YggU (96 aa).

The protein belongs to the UPF0235 family.

This is UPF0235 protein YggU from Escherichia coli O127:H6 (strain E2348/69 / EPEC).